Here is a 79-residue protein sequence, read N- to C-terminus: UPF0180 protein BCG9842_B3897 (79 aa).

The protein belongs to the UPF0180 family.

This chain is UPF0180 protein BCG9842_B3897, found in Bacillus cereus (strain G9842).